The primary structure comprises 1130 residues: 3-hydroxy-3-methylglutaryl-coenzyme A reductase 1 (1130 aa).

Topologically, residues Met-1–Thr-46 are cytoplasmic. A helical transmembrane segment spans residues Ile-47–Phe-67. Topologically, residues Asp-68 to Asp-242 are lumenal. A glycan (N-linked (GlcNAc...) asparagine) is linked at Asn-148. Positions Asp-242 to Ile-415 constitute an SSD domain. Residues Ile-243–Ser-263 traverse the membrane as a helical segment. The Cytoplasmic portion of the chain corresponds to Met-264–Asn-270. Residues Phe-271–Val-291 traverse the membrane as a helical segment. Topologically, residues Thr-292–Gly-296 are lumenal. Residues Val-297 to Phe-317 traverse the membrane as a helical segment. Topologically, residues Glu-318–Arg-366 are cytoplasmic. Residues Asp-367 to Leu-387 form a helical membrane-spanning segment. The Lumenal portion of the chain corresponds to Arg-388–Gln-389. Residues Phe-390–Thr-410 form a helical membrane-spanning segment. The Cytoplasmic portion of the chain corresponds to Thr-411–Arg-476. A helical membrane pass occupies residues Phe-477 to Pro-497. At Phe-498–Pro-601 the chain is on the lumenal side. A helical membrane pass occupies residues Ile-602–Phe-622. Topologically, residues Asn-623 to Glu-1130 are cytoplasmic. Catalysis depends on Glu-792, which acts as the Charge relay system. CoA is bound at residue Ser-798–Lys-804. NADP(+) contacts are provided by residues Ser-859–Phe-861 and Asp-886–Ser-894. Lys-926 (charge relay system) is an active-site residue. Val-955–Lys-957 provides a ligand contact to CoA. Residue Asp-1002 is the Charge relay system of the active site. Residue Ala-1097–His-1098 participates in CoA binding. His-1098 serves as the catalytic Proton donor. Asn-1102–Arg-1103 contacts NADP(+). Over residues Arg-1103–Arg-1122 the composition is skewed to low complexity. Residues Arg-1103 to Glu-1130 form a disordered region.

Belongs to the HMG-CoA reductase family.

Its subcellular location is the endoplasmic reticulum membrane. It catalyses the reaction (R)-mevalonate + 2 NADP(+) + CoA = (3S)-3-hydroxy-3-methylglutaryl-CoA + 2 NADPH + 2 H(+). The protein operates within metabolic intermediate biosynthesis; (R)-mevalonate biosynthesis; (R)-mevalonate from acetyl-CoA: step 3/3. Its function is as follows. HMG-CoA reductase; part of the first module of ergosterol biosynthesis pathway that includes the early steps of the pathway, conserved across all eukaryotes, and which results in the formation of mevalonate from acetyl-coenzyme A (acetyl-CoA). Hmg1 and hmg2 catalyze the reduction of hydroxymethylglutaryl-CoA (HMG-CoA) to mevalonate. The first module starts with the action of the cytosolic acetyl-CoA acetyltransferase erg10B that catalyzes the formation of acetoacetyl-CoA. The hydroxymethylglutaryl-CoA synthases erg13A and erg13B then condense acetyl-CoA with acetoacetyl-CoA to form HMG-CoA. The rate-limiting step of the early module is the reduction to mevalonate by the 3-hydroxy-3-methylglutaryl-coenzyme A (HMG-CoA) reductases hmg1 and hmg2. Mevalonate is also a precursor for the extracellular siderophore triacetylfusarinine C (TAFC). The chain is 3-hydroxy-3-methylglutaryl-coenzyme A reductase 1 from Aspergillus fumigatus (strain ATCC MYA-4609 / CBS 101355 / FGSC A1100 / Af293) (Neosartorya fumigata).